The sequence spans 209 residues: NADH-ubiquinone oxidoreductase subunit 9 (209 aa).

This sequence belongs to the complex I 30 kDa subunit family. Complex I is composed of about 30 different subunits.

It is found in the mitochondrion inner membrane. It carries out the reaction a ubiquinone + NADH + 5 H(+)(in) = a ubiquinol + NAD(+) + 4 H(+)(out). In terms of biological role, core subunit of the mitochondrial membrane respiratory chain NADH dehydrogenase (Complex I) that is believed to belong to the minimal assembly required for catalysis. Complex I functions in the transfer of electrons from NADH to the respiratory chain. The immediate electron acceptor for the enzyme is believed to be ubiquinone. This Paramecium primaurelia protein is NADH-ubiquinone oxidoreductase subunit 9 (NAD9).